A 336-amino-acid chain; its full sequence is tRNA N6-adenosine threonylcarbamoyltransferase (336 aa).

Positions 111 and 115 each coordinate Fe cation. Residues 134-138 (VVSGG), Asp167, Gly180, Asp184, and Asn272 each bind substrate. Asp300 contributes to the Fe cation binding site.

It belongs to the KAE1 / TsaD family. Fe(2+) is required as a cofactor.

It localises to the cytoplasm. It catalyses the reaction L-threonylcarbamoyladenylate + adenosine(37) in tRNA = N(6)-L-threonylcarbamoyladenosine(37) in tRNA + AMP + H(+). Functionally, required for the formation of a threonylcarbamoyl group on adenosine at position 37 (t(6)A37) in tRNAs that read codons beginning with adenine. Is involved in the transfer of the threonylcarbamoyl moiety of threonylcarbamoyl-AMP (TC-AMP) to the N6 group of A37, together with TsaE and TsaB. TsaD likely plays a direct catalytic role in this reaction. The protein is tRNA N6-adenosine threonylcarbamoyltransferase of Caldicellulosiruptor saccharolyticus (strain ATCC 43494 / DSM 8903 / Tp8T 6331).